The chain runs to 406 residues: Interactor protein for cytohesin exchange factors 1 (406 aa).

Residues 13–112 (HADCQGWLYK…WLNKLGFAVT (100 aa)) enclose the PH domain. Disordered regions lie at residues 118-173 (TKDE…FSSL), 228-285 (CRVS…EDDE), and 383-406 (PQDP…ENSL). Residues 123-134 (CYSESEQEDPET) are compositionally biased toward acidic residues. The segment covering 144 to 160 (ASATSSPVAARRASSSS) has biased composition (low complexity). Residues 228–239 (CRVSENSSTTPE) are compositionally biased toward polar residues. Residues 243-259 (LNSLSSDDTSSLNNSQD) show a composition bias toward low complexity. Residues 272 to 285 (MTDRDEIKSSEDDE) show a composition bias toward basic and acidic residues. Positions 285–406 (EMEKLYKSLE…TSSDCVENSL (122 aa)) are necessary for interaction with PSCD2 and to translocate to the plasma membrane. Positions 392-406 (EIMNPTSSDCVENSL) are enriched in polar residues.

Interacts with guanine-nucleotide exchange factors PSCD1, PSCD2, PSCD3 and PSCD4. In terms of tissue distribution, expressed in brain, spleen, lung, testis and kidney.

The protein resides in the cytoplasm. It localises to the cell membrane. Its function is as follows. Enhances the promotion of guanine-nucleotide exchange by PSCD2 on ARF6 in a concentration-dependent manner. In Rattus norvegicus (Rat), this protein is Interactor protein for cytohesin exchange factors 1 (Ipcef1).